A 620-amino-acid polypeptide reads, in one-letter code: 1-deoxy-D-xylulose-5-phosphate synthase (620 aa).

Residues His-80 and 121–123 (GHS) contribute to the thiamine diphosphate site. Residue Asp-152 coordinates Mg(2+). Thiamine diphosphate-binding positions include 153–154 (GA), Asn-181, Tyr-288, and Glu-370. Asn-181 contributes to the Mg(2+) binding site.

Belongs to the transketolase family. DXPS subfamily. Homodimer. Mg(2+) is required as a cofactor. It depends on thiamine diphosphate as a cofactor.

The catalysed reaction is D-glyceraldehyde 3-phosphate + pyruvate + H(+) = 1-deoxy-D-xylulose 5-phosphate + CO2. It participates in metabolic intermediate biosynthesis; 1-deoxy-D-xylulose 5-phosphate biosynthesis; 1-deoxy-D-xylulose 5-phosphate from D-glyceraldehyde 3-phosphate and pyruvate: step 1/1. Its function is as follows. Catalyzes the acyloin condensation reaction between C atoms 2 and 3 of pyruvate and glyceraldehyde 3-phosphate to yield 1-deoxy-D-xylulose-5-phosphate (DXP). This Salmonella heidelberg (strain SL476) protein is 1-deoxy-D-xylulose-5-phosphate synthase.